Consider the following 338-residue polypeptide: Lipoate-protein ligase A (338 aa).

A BPL/LPL catalytic domain is found at 29–216 (PATQRVLFLW…AFFAHYGERI (188 aa)). ATP-binding positions include Arg71, 76–79 (GAVF), and Lys134. Lys134 is a (R)-lipoate binding site.

Belongs to the LplA family. Monomer.

It is found in the cytoplasm. The enzyme catalyses L-lysyl-[lipoyl-carrier protein] + (R)-lipoate + ATP = N(6)-[(R)-lipoyl]-L-lysyl-[lipoyl-carrier protein] + AMP + diphosphate + H(+). It functions in the pathway protein modification; protein lipoylation via exogenous pathway; protein N(6)-(lipoyl)lysine from lipoate: step 1/2. The protein operates within protein modification; protein lipoylation via exogenous pathway; protein N(6)-(lipoyl)lysine from lipoate: step 2/2. Catalyzes both the ATP-dependent activation of exogenously supplied lipoate to lipoyl-AMP and the transfer of the activated lipoyl onto the lipoyl domains of lipoate-dependent enzymes. The protein is Lipoate-protein ligase A of Salmonella paratyphi A (strain ATCC 9150 / SARB42).